A 176-amino-acid polypeptide reads, in one-letter code: Large ribosomal subunit protein uL6 (176 aa).

The segment covering Arg-151–Arg-170 has biased composition (basic and acidic residues). Residues Arg-151–Lys-176 are disordered.

Belongs to the universal ribosomal protein uL6 family. As to quaternary structure, part of the 50S ribosomal subunit.

This protein binds to the 23S rRNA, and is important in its secondary structure. It is located near the subunit interface in the base of the L7/L12 stalk, and near the tRNA binding site of the peptidyltransferase center. The chain is Large ribosomal subunit protein uL6 from Shewanella halifaxensis (strain HAW-EB4).